The sequence spans 375 residues: Histidine biosynthesis bifunctional protein HisB (375 aa).

A histidinol-phosphatase region spans residues 1-168 (MTPILFVDRD…GIAHELADAP (168 aa)). Catalysis depends on Asp8, which acts as the Nucleophile. Mg(2+) is bound by residues Asp8, Asp10, and Asp128. The active-site Proton donor is the Asp10. The imidazoleglycerol-phosphate dehydratase stretch occupies residues 169–375 (RRALVQRNTK…TALPTTKGTL (207 aa)).

This sequence in the N-terminal section; belongs to the histidinol-phosphatase family. In the C-terminal section; belongs to the imidazoleglycerol-phosphate dehydratase family. Mg(2+) is required as a cofactor.

Its subcellular location is the cytoplasm. The catalysed reaction is D-erythro-1-(imidazol-4-yl)glycerol 3-phosphate = 3-(imidazol-4-yl)-2-oxopropyl phosphate + H2O. It carries out the reaction L-histidinol phosphate + H2O = L-histidinol + phosphate. The protein operates within amino-acid biosynthesis; L-histidine biosynthesis; L-histidine from 5-phospho-alpha-D-ribose 1-diphosphate: step 6/9. It functions in the pathway amino-acid biosynthesis; L-histidine biosynthesis; L-histidine from 5-phospho-alpha-D-ribose 1-diphosphate: step 8/9. The protein is Histidine biosynthesis bifunctional protein HisB of Xanthomonas axonopodis pv. citri (strain 306).